The sequence spans 1058 residues: Carbamoyl phosphate synthase large chain (1058 aa).

The segment at 1-401 (MAKRTDIKKI…CLLKACRSLE (401 aa)) is carboxyphosphate synthetic domain. Positions 129, 169, 175, 176, 208, 210, 215, 241, 242, 243, 284, and 298 each coordinate ATP. The ATP-grasp 1 domain maps to 133 to 327 (KQLMKELGEP…IAKIAAKIAV (195 aa)). Gln284, Glu298, and Asn300 together coordinate Mg(2+). Mn(2+)-binding residues include Gln284, Glu298, and Asn300. The tract at residues 402 to 546 (IGVHHNELKG…YSTYEWENES (145 aa)) is oligomerization domain. The carbamoyl phosphate synthetic domain stretch occupies residues 547–929 (IKSEKESVIV…ALYKAFEASY (383 aa)). The ATP-grasp 2 domain maps to 671-861 (EKALKELGIP…MAQVATKLIL (191 aa)). Residues Arg707, Ser746, Ile748, Glu752, Gly777, Val778, His779, Ser780, Gln820, and Glu832 each coordinate ATP. Residues Gln820, Glu832, and Asn834 each contribute to the Mg(2+) site. Mn(2+)-binding residues include Gln820, Glu832, and Asn834. Positions 930–1058 (LHMPEYGTIV…ESRTFSIEAI (129 aa)) constitute an MGS-like domain. The interval 930–1058 (LHMPEYGTIV…ESRTFSIEAI (129 aa)) is allosteric domain.

It belongs to the CarB family. In terms of assembly, composed of two chains; the small (or glutamine) chain promotes the hydrolysis of glutamine to ammonia, which is used by the large (or ammonia) chain to synthesize carbamoyl phosphate. Tetramer of heterodimers (alpha,beta)4. Requires Mg(2+) as cofactor. Mn(2+) serves as cofactor.

It carries out the reaction hydrogencarbonate + L-glutamine + 2 ATP + H2O = carbamoyl phosphate + L-glutamate + 2 ADP + phosphate + 2 H(+). The enzyme catalyses hydrogencarbonate + NH4(+) + 2 ATP = carbamoyl phosphate + 2 ADP + phosphate + 2 H(+). It participates in amino-acid biosynthesis; L-arginine biosynthesis; carbamoyl phosphate from bicarbonate: step 1/1. Its pathway is pyrimidine metabolism; UMP biosynthesis via de novo pathway; (S)-dihydroorotate from bicarbonate: step 1/3. Large subunit of the glutamine-dependent carbamoyl phosphate synthetase (CPSase). CPSase catalyzes the formation of carbamoyl phosphate from the ammonia moiety of glutamine, carbonate, and phosphate donated by ATP, constituting the first step of 2 biosynthetic pathways, one leading to arginine and/or urea and the other to pyrimidine nucleotides. The large subunit (synthetase) binds the substrates ammonia (free or transferred from glutamine from the small subunit), hydrogencarbonate and ATP and carries out an ATP-coupled ligase reaction, activating hydrogencarbonate by forming carboxy phosphate which reacts with ammonia to form carbamoyl phosphate. The polypeptide is Carbamoyl phosphate synthase large chain (Streptococcus equi subsp. equi (strain 4047)).